A 265-amino-acid chain; its full sequence is Transcription factor BHLH062 (265 aa).

The tract at residues 1–26 (MVPRDRVNAAAAGGGGEGRLVQSGIV) is disordered. The interval 35–48 (PKRIHKSEREKLKR) is basic motif; degenerate. One can recognise a bHLH domain in the interval 35–85 (PKRIHKSEREKLKRDKQNDLFNELGNLLEPDRQNNGKACVLGETTRILKDL). Residues 49–85 (DKQNDLFNELGNLLEPDRQNNGKACVLGETTRILKDL) form a helix-loop-helix motif region. Residues 75–130 (LGETTRILKDLLSQVESLRKENSSLKNESHYVALERNELHDDNSMLRTEILELQNE) adopt a coiled-coil conformation. A disordered region spans residues 200-265 (ESATSEDSEP…TNEEDRIGRS (66 aa)). The segment covering 210–220 (SQEHGISDHVT) has biased composition (basic and acidic residues). Polar residues predominate over residues 245 to 256 (QDQQCSSGTSGT).

This sequence belongs to the bHLH protein family. In terms of assembly, interacts with TIFY11A/JAZ9.

The protein localises to the nucleus. Transcription factor that plays a positive role in salt stress tolerance. Interacts with TIFY11A/JAZ9 and binds to the promoter of some potassium ion transporter genes to regulate potassium homeostasis during salt stress. The sequence is that of Transcription factor BHLH062 from Oryza sativa subsp. japonica (Rice).